We begin with the raw amino-acid sequence, 759 residues long: Na(+)/H(+) exchanger beta (759 aa).

Residues 1–14 (MPAFSCAFPGCRRD) are Cytoplasmic-facing. Residues 15–34 (LLVIVLVVFVGIGLPIEASA) traverse the membrane as a helical segment. Over 35–75 (PAYQSHGTEGSHLTNITNTKKAFPVLAVNYEHVRKPFEIAL) the chain is Extracellular. Residue Asn49 is glycosylated (N-linked (GlcNAc...) asparagine). The chain crosses the membrane as a helical span at residues 76–95 (WILLALLMKLGFHLIPRLSA). The Cytoplasmic portion of the chain corresponds to 96 to 97 (VV). A helical membrane pass occupies residues 98–117 (PESCLLIVVGLLVGGLIKVI). At 118–122 (GEEPP) the chain is on the extracellular side. Residues 123 to 142 (VLDSQLFFLCLLPPIILDAG) form a helical membrane-spanning segment. The Cytoplasmic segment spans residues 143 to 149 (YFLPIRP). Residues 150–169 (FTENVGTILVFAVIGTLWNA) form a helical membrane-spanning segment. At 170–195 (FFMGGLLYALCQIESVGLSGVDLLAC) the chain is on the extracellular side. A helical transmembrane segment spans residues 196-214 (LLFGSIVSAVDPVAVLAVF). Residues 215–225 (EEIHINELVHI) lie on the Cytoplasmic side of the membrane. A helical transmembrane segment spans residues 226-244 (LVFGESLLNDAVTVVLYNL). Over 245-261 (FEEFSKVGTVTVLDVFL) the chain is Extracellular. The chain crosses the membrane as a helical span at residues 262 to 282 (GVVCFFVVSLGGVLVGAIYGF). Over 283 to 311 (LAAFTSRFTSHTRVIEPLFVFLYSYMAYL) the chain is Cytoplasmic. The chain crosses the membrane as a helical span at residues 312–330 (SSEMFHLSGIMALIACGVV). At 331 to 352 (MRPYVEANISHKSYTTIKYFLK) the chain is on the extracellular side. Asn338 carries N-linked (GlcNAc...) asparagine glycosylation. The chain crosses the membrane as a helical span at residues 353 to 372 (MWSSVSETLIFIFLGVSTVA). Topologically, residues 373 to 376 (GPHA) are cytoplasmic. The helical transmembrane segment at 377–398 (WNWTFVITTVILCLVSRVLGVI) threads the bilayer. Over 399 to 446 (GLTFIINKFRIVKLTKKDQFIVAYGGLRGAIAFSLGYLLSNSHQMRNL) the chain is Extracellular. A helical membrane pass occupies residues 447–467 (FLTAIITVIFFTVFVQGMTIR). The Cytoplasmic segment spans residues 468–759 (PLVELLAVKK…KEDDDPFMSC (292 aa)). Phosphoserine; by PKA is present on residues Ser641 and Ser648. The segment at 681–759 (FPTVHFEQPS…KEDDDPFMSC (79 aa)) is disordered. The span at 707–719 (VPKRPSLKADIEG) shows a compositional bias: basic and acidic residues.

It belongs to the monovalent cation:proton antiporter 1 (CPA1) transporter (TC 2.A.36) family. Post-translationally, activated by cAMP, protein kinase A and protein kinase C.

The protein resides in the basolateral cell membrane. In terms of biological role, involved in pH regulation to eliminate acids generated by active metabolism or to counter adverse environmental conditions. Major proton extruding system driven by the inward sodium ion chemical gradient. This is Na(+)/H(+) exchanger beta from Oncorhynchus mykiss (Rainbow trout).